The following is a 1723-amino-acid chain: METIVNNQNNGQQNTVPTQSFSSSVYMNYDFFDSQQLQQPQHQPQHYQQQDSFVSPNLDNNNPQIHVQSNNYNQNGFVGYNNSNNNNNNNQHMNNQYSNSFHNNNSSGFMAFQNNSSNFNNQNNNNSNNNNNNNNINSYDYNNSNNNNYNNNNNTHSNNSNNNNNNNNSNYWNNNNNNNNNNNNNNNNNNNNNNNNNNNNNSNNNNNNNNNNNHHHHHHQQQSQPTSPYNNPIQHNPNDMKFNGQHNPFNGNQMVMDNNNNNNNNNNSNVFNSNSNSNVFNSNSGSFLQINNNNGSFSSYNNNNNNNNNNNSNSNNNNNNNNNNNNNNNNNNNNNNNNNNNNNSNNNNNNQFSQSYDSTLGNNRFSSMMGQPIQQQQSPPQQQQQQSFIQSSPQAIPASNCNGNGSTSSSTSPLSPTLIGSAPGTPTSMLATTLFGFNLSSSPTSSPSSPVKKGKSQSALALSSSGGSGGSSGRKKPQKHDSMSSITNTNLKSTQASTLKESKRSNSSPNLKKQMQLQQLQQQQKLNENGTLIPPLPFASISENITNNNNNNNNNNNNNNNNNNNNNITNNPLSGSMEFPNSNNINQSSDSINGEFNIGQPESPKMYNSSPSPPPNATSTTKGGKKSKKSLHISTTQQSPSLNGSTGGSMLTPTMSGLSLSGGGSGGGFSPLISPTGTTSNKDLQSSPSPSPLLKSMSMGKLDLQDSIDSMSSPLSPNSSLSSSNGLLPPPPNSNNMNSSGGIPTPSTPTSPPPLTHHINIFSNLEFVKQLKDHLLPNDFKPEEHALERNLLRFQQFVKTLAEPLQRDVVTSMFELSVDAQLQYGSNLDNDNLSALMLFRRKILNFNLFRMMMLNDPNSFIPLPSPFPIQTTTISSNGTIVNPTNVNNNNINNNNNNNNNNNNNNNNNNNNNNNNNNNNTTTTTTTTTSANTVQSGTTSNSNLVFQQTSNSNTLSPSQQQQQQTQQQQSINGSSTGSLSDAQYQDLGIHLDTSSANSGCGINVSIGSSIGGGGGGSSLNGSNLNGSSSISGSISGGSSNGGGQFIMSPQFSLDGAYQQQQPSSYNINNEMELAEKDEDEIFNNNNKDNNNNNNNNNNNNNNNNNNNNNNNNNNNNNNSSSINSNINNVNNCNINNNSNSNNGSINSPRPSTPTTLNSSGKRSKKIYRGDSFGAGNDISTGLMASSDQIIPPPQQQQHQQLVNNNNNNMNNSENNILLADSNKGLSVSLGSLPTNTPSSMEIEQQQQQQQQQQQQQQQQHLNQQQILHQQLHHHLSSSLGGAQFTNIQQQQQQQSGNIFYNSPYNSSQVYMNPYGTSITNTSLAGPSTTSSAMQHMITNMTSSNIIVNNQNNNNNDQNNNNNNNNNNNSTTNSNVNNNNNTTNTPSSPPQPNNCTPTQTSIITSNGVVVPSLQMRGTITNPPPVLPTPDTLVLQQQQQQQQQQQQQQQQQQQQQQQQQQQQQQETPHTPTSNSISSPRSSPVHQQSPSNTNTTTTSTTTIRHSAVTQLSFAGLHNQQVSPISPRSPRSPHGTSGDYNDGSQSPSSRRKNRFTDFQIKRMNDCFENLDKNNNGKFTSEEICQIATELGLTDQQVRVFFQNKRARSRPSPRGQPTNPLTSSTNNGNNSNLALQHLQQQHLQQVQQQQQQLLQLQQQQQQQQQQLHQQSANTTPQLNSMNPNSINYNNNNNNNNNNNNNNNNNNNNNNNNNNNNNNIINNNITTINE.

The span at 36-50 shows a compositional bias: low complexity; sequence QLQQPQHQPQHYQQQ. 9 disordered regions span residues 36-425, 440-522, 543-756, 878-978, 1080-1214, 1226-1264, 1345-1399, 1456-1498, and 1513-1547; these read QLQQ…APGT, SSSP…QLQQ, ENIT…PPLT, GTIV…TGSL, IFNN…SENN, VSLGSLPTNTPSSMEIEQQQQQQQQQQQQQQQQHLNQQQ, IVNN…TQTS, QQQQ…STTT, and HNQQVSPISPRSPRSPHGTSGDYNDGSQSPSSRRK. The span at 51–72 shows a compositional bias: polar residues; sequence DSFVSPNLDNNNPQIHVQSNNY. Low complexity-rich tracts occupy residues 73–107 and 114–212; these read NQNGFVGYNNSNNNNNNNQHMNNQYSNSFHNNNSS and NNSS…NNNN. Polar residues-rich tracts occupy residues 223-237 and 244-257; these read SQPTSPYNNPIQHNP and GQHNPFNGNQMVMD. Composition is skewed to low complexity over residues 258-284 and 291-350; these read NNNNNNNNNNSNVFNSNSNSNVFNSNS and NNNN…NNNN. A coiled-coil region spans residues 300 to 351; that stretch reads YNNNNNNNNNNNSNSNNNNNNNNNNNNNNNNNNNNNNNNNNNNNSNNNNNNQ. The segment covering 351-369 has biased composition (polar residues); sequence QFSQSYDSTLGNNRFSSMM. Low complexity-rich tracts occupy residues 371–421 and 440–465; these read QPIQ…LIGS and SSSPTSSPSSPVKKGKSQSALALSSS. Positions 483 to 510 are enriched in polar residues; that stretch reads MSSITNTNLKSTQASTLKESKRSNSSPN. 3 stretches are compositionally biased toward low complexity: residues 511-522, 544-571, and 581-593; these read LKKQMQLQQLQQ, NITNNNNNNNNNNNNNNNNNNNNNITNN, and NSNNINQSSDSIN. The span at 632-655 shows a compositional bias: polar residues; that stretch reads HISTTQQSPSLNGSTGGSMLTPTM. Over residues 660–669 the composition is skewed to gly residues; sequence LSGGGSGGGF. Residues 673-685 are compositionally biased toward polar residues; that stretch reads ISPTGTTSNKDLQ. Low complexity-rich tracts occupy residues 686 to 699, 710 to 727, and 734 to 745; these read SSPSPSPLLKSMSM, SMSSPLSPNSSLSSSNGL, and SNNMNSSGGIPT. Positions 746–755 are enriched in pro residues; it reads PSTPTSPPPL. A compositionally biased stretch (low complexity) spans 882–928; the sequence is NPTNVNNNNINNNNNNNNNNNNNNNNNNNNNNNNNNNNTTTTTTTTT. The span at 929-945 shows a compositional bias: polar residues; the sequence is SANTVQSGTTSNSNLVF. Low complexity-rich tracts occupy residues 946 to 977 and 1082 to 1146; these read QQTSNSNTLSPSQQQQQQTQQQQSINGSSTGS and NNNN…SINS. 2 stretches are compositionally biased toward polar residues: residues 1147 to 1159 and 1176 to 1187; these read PRPSTPTTLNSSG and DISTGLMASSDQ. Residues 1193-1270 adopt a coiled-coil conformation; it reads QQQQHQQLVN…NQQQILHQQL (78 aa). Low complexity predominate over residues 1194 to 1214; sequence QQQHQQLVNNNNNNMNNSENN. The segment covering 1226 to 1242 has biased composition (polar residues); it reads VSLGSLPTNTPSSMEIE. 5 stretches are compositionally biased toward low complexity: residues 1243-1264, 1347-1384, 1456-1480, 1487-1498, and 1518-1528; these read QQQQQQQQQQQQQQQQHLNQQQ, NNQNNNNNDQNNNNNNNNNNNSTTNSNVNNNNNTTNTP, QQQQQQQETPHTPTSNSISSPRSSP, SNTNTTTTSTTT, and SPISPRSPRSP. A coiled-coil region spans residues 1431 to 1464; that stretch reads VLQQQQQQQQQQQQQQQQQQQQQQQQQQQQQQET. Polar residues predominate over residues 1529–1543; that stretch reads HGTSGDYNDGSQSPS. Residues 1543–1607 constitute a DNA-binding region (homeobox); it reads SSRRKNRFTD…NKRARSRPSP (65 aa). In terms of domain architecture, EF-hand spans 1553–1588; it reads FQIKRMNDCFENLDKNNNGKFTSEEICQIATELGLT. Disordered regions lie at residues 1598–1625 and 1661–1723; these read NKRARSRPSPRGQPTNPLTSSTNNGNNS and LHQQ…TINE. Residues 1612–1625 are compositionally biased toward low complexity; it reads TNPLTSSTNNGNNS. Positions 1632 to 1702 form a coiled coil; that stretch reads LQQQHLQQVQ…NNNNNNNNNN (71 aa). A compositionally biased stretch (polar residues) spans 1665 to 1675; that stretch reads SANTTPQLNSM. The segment covering 1676–1723 has biased composition (low complexity); it reads NPNSINYNNNNNNNNNNNNNNNNNNNNNNNNNNNNNNIINNNITTINE.

It is found in the nucleus. Its function is as follows. Putative transcription factor. This is Homeobox protein 5 (hbx5-1) from Dictyostelium discoideum (Social amoeba).